Here is a 162-residue protein sequence, read N- to C-terminus: Photosystem II extrinsic protein V (162 aa).

The signal sequence occupies residues M1–A25. C62, C65, H66, and H117 together coordinate heme c.

It belongs to the cytochrome c family. PsbV subfamily. As to quaternary structure, PSII is composed of 1 copy each of membrane proteins PsbA, PsbB, PsbC, PsbD, PsbE, PsbF, PsbH, PsbI, PsbJ, PsbK, PsbL, PsbM, PsbT, PsbX, PsbY, PsbZ, Psb30/Ycf12, peripheral proteins PsbO, CyanoQ (PsbQ), PsbU, PsbV and a large number of cofactors. It forms dimeric complexes. Requires heme c as cofactor.

The protein localises to the cellular thylakoid membrane. One of the extrinsic, lumenal subunits of photosystem II (PSII). PSII is a light-driven water plastoquinone oxidoreductase, using light energy to abstract electrons from H(2)O, generating a proton gradient subsequently used for ATP formation. The extrinsic proteins stabilize the structure of photosystem II oxygen-evolving complex (OEC), the ion environment of oxygen evolution and protect the OEC against heat-induced inactivation. Low-potential cytochrome c that plays a role in the OEC of PSII. In Cyanothece sp. (strain PCC 7425 / ATCC 29141), this protein is Photosystem II extrinsic protein V.